Here is a 446-residue protein sequence, read N- to C-terminus: ATP synthase subunit b-delta (446 aa).

An ATP synthase subunit b region spans residues 1–168 (MSTFIGQLFG…PATADVDYPL (168 aa)). Residues 4–24 (FIGQLFGFAVIVYLVWRFIVP) traverse the membrane as a helical segment. Residues 169 to 446 (LAKMRSASRR…LAAAEARLPD (278 aa)) are ATP synthase subunit delta.

This sequence in the N-terminal section; belongs to the ATPase B chain family. The protein in the C-terminal section; belongs to the ATPase delta chain family. F-type ATPases have 2 components, F(1) - the catalytic core - and F(0) - the membrane proton channel. F(1) has five subunits: alpha(3), beta(3), gamma(1), delta(1), epsilon(1). F(0) has three main subunits: a(1), b(2) and c(10-14). The alpha and beta chains form an alternating ring which encloses part of the gamma chain. F(1) is attached to F(0) by a central stalk formed by the gamma and epsilon chains, while a peripheral stalk is formed by the delta and b chains.

The protein resides in the cell membrane. In terms of biological role, f(1)F(0) ATP synthase produces ATP from ADP in the presence of a proton or sodium gradient. F-type ATPases consist of two structural domains, F(1) containing the extramembraneous catalytic core and F(0) containing the membrane proton channel, linked together by a central stalk and a peripheral stalk. During catalysis, ATP synthesis in the catalytic domain of F(1) is coupled via a rotary mechanism of the central stalk subunits to proton translocation. Functionally, this fusion protein includes a component of the F(0) channel (subunit b) and of the F(1) subunit (subunit delta). Two copies of subunit b and one of delta together form the peripheral 'stator' stalk which links F(1) to F(0). The sequence is that of ATP synthase subunit b-delta (atpFH) from Mycobacterium tuberculosis (strain CDC 1551 / Oshkosh).